Consider the following 268-residue polypeptide: Putative esterase/lipase 2 (268 aa).

His-29 is a catalytic residue. Ser-98 (charge relay system) is an active-site residue.

The protein belongs to the lipase/esterase LIP3/BchO family.

The protein is Putative esterase/lipase 2 of Mycoplasma genitalium (strain ATCC 33530 / DSM 19775 / NCTC 10195 / G37) (Mycoplasmoides genitalium).